The following is a 415-amino-acid chain: Putative ankyrin repeat protein FPV034 (415 aa).

ANK repeat units follow at residues 12-41 (ICIK…NINT), 43-72 (KHFN…NINI), 76-105 (VGYT…IINK), 107-135 (DYRL…NINV), 139-168 (KGYT…DISI), 170-200 (NKYS…DVNI), 203-232 (HVKA…DVNI), 237-266 (GGRT…NVDS), 270-299 (VGNT…DINV), and 303-332 (FGET…SLKV).

The chain is Putative ankyrin repeat protein FPV034 (ANK2) from Fowlpox virus (strain NVSL) (FPV).